Consider the following 755-residue polypeptide: 1,4-alpha-glucan branching enzyme GlgB (755 aa).

The active-site Nucleophile is Asp435. Glu488 serves as the catalytic Proton donor.

Belongs to the glycosyl hydrolase 13 family. GlgB subfamily. As to quaternary structure, monomer.

It carries out the reaction Transfers a segment of a (1-&gt;4)-alpha-D-glucan chain to a primary hydroxy group in a similar glucan chain.. It participates in glycan biosynthesis; glycogen biosynthesis. In terms of biological role, catalyzes the formation of the alpha-1,6-glucosidic linkages in glycogen by scission of a 1,4-alpha-linked oligosaccharide from growing alpha-1,4-glucan chains and the subsequent attachment of the oligosaccharide to the alpha-1,6 position. The polypeptide is 1,4-alpha-glucan branching enzyme GlgB (Vibrio parahaemolyticus serotype O3:K6 (strain RIMD 2210633)).